Here is a 547-residue protein sequence, read N- to C-terminus: MPQLLLLACLLIIVTRVAPRALDPCSAYISLNEPWRNTEHQFDESRGSPLCDNSVDGEWYRFTGMAGDAMPTFCIPENHCGTHAPVWLNGSHPLEGDGIVQRQACASFNGNCCLWNTTVEVKSCPGGYYVYRLTKPSVCFHVYCGHFYDICDDDCHGSCLGTSECTCAPGTVLGPDRQTCFDENECEQNNGGCSEICVNLKNSYRCECGIGRVLRSDGKTCEDIEGCHNNNGGCSHSCLTSETGYQCECPRGLVLSEDNHTCQVPVFCKSNTIEVSIPRDLVGGLELFLTNTSCRGVSNGTHVNILFSLKTCGTVVDVVNDKIVASNLVTGLPKQTPGSSGDIIIRTSKLLIPVTCEFPRLYTISEGYVPNLRNTPLEIMSRSHGIFPFTLEIFKDHEFEEPYREALPTLKLRDSLYFGIEPLVHVNGLESLVESCFATPTSKIDEIMKYYIIQDGCVSDDSVKQYTSRDHLAKHFQVPVFKFVGKDHKEVFLHCRVLVCGMLDERSRCAQGCHRRVRREASTEGEDASGPRSQMLTGGPISIDWED.

An N-terminal signal peptide occupies residues 1-19 (MPQLLLLACLLIIVTRVAP). 2 N-linked (GlcNAc...) asparagine glycosylation sites follow: Asn89 and Asn116. One can recognise an EGF-like; calcium-binding domain in the interval 182–222 (DENECEQNNGGCSEICVNLKNSYRCECGIGRVLRSDGKTCE). Cystine bridges form between Cys186-Cys197, Cys193-Cys206, and Cys208-Cys221. The 250-residue stretch at 267 to 516 (FCKSNTIEVS…SRCAQGCHRR (250 aa)) folds into the ZP domain. A glycan (N-linked (GlcNAc...) asparagine) is linked at Asn299. The interval 520–547 (EASTEGEDASGPRSQMLTGGPISIDWED) is disordered.

The protein resides in the nucleus envelope. May be involved in hepatocellular function and development. The protein is Oncoprotein-induced transcript 3 protein (OIT3) of Bos taurus (Bovine).